The chain runs to 420 residues: Pyrophosphate--fructose 6-phosphate 1-phosphotransferase (420 aa).

G13 is a diphosphate binding site. Residues 142–144 (TVD), 190–192 (MGR), E247, and 297–300 (YLQR) each bind substrate. D144 (proton acceptor) is an active-site residue.

It belongs to the phosphofructokinase type A (PFKA) family. PPi-dependent PFK group II subfamily. Clade 'B2' sub-subfamily. Homodimer. Mg(2+) is required as a cofactor. Co(2+) serves as cofactor. The cofactor is Mn(2+).

It is found in the cytoplasm. It carries out the reaction beta-D-fructose 6-phosphate + diphosphate = beta-D-fructose 1,6-bisphosphate + phosphate + H(+). It functions in the pathway carbohydrate degradation; glycolysis; D-glyceraldehyde 3-phosphate and glycerone phosphate from D-glucose: step 3/4. With respect to regulation, non-allosteric. Catalyzes the phosphorylation of D-fructose 6-phosphate, the first committing step of glycolysis. Uses inorganic phosphate (PPi) as phosphoryl donor instead of ATP like common ATP-dependent phosphofructokinases (ATP-PFKs), which renders the reaction reversible, and can thus function both in glycolysis and gluconeogenesis. Consistently, PPi-PFK can replace the enzymes of both the forward (ATP-PFK) and reverse (fructose-bisphosphatase (FBPase)) reactions. This chain is Pyrophosphate--fructose 6-phosphate 1-phosphotransferase, found in Methylococcus capsulatus (strain ATCC 33009 / NCIMB 11132 / Bath).